Here is a 579-residue protein sequence, read N- to C-terminus: DNA ligase 1 (579 aa).

E244 serves as a coordination point for ATP. The N6-AMP-lysine intermediate role is filled by K246. 6 residues coordinate ATP: R251, R266, E296, F342, R419, and K425.

The protein belongs to the ATP-dependent DNA ligase family. Requires Mg(2+) as cofactor.

The catalysed reaction is ATP + (deoxyribonucleotide)n-3'-hydroxyl + 5'-phospho-(deoxyribonucleotide)m = (deoxyribonucleotide)n+m + AMP + diphosphate.. Functionally, DNA ligase that seals nicks in double-stranded DNA during DNA replication, DNA recombination and DNA repair. The chain is DNA ligase 1 from Methanosarcina mazei (strain ATCC BAA-159 / DSM 3647 / Goe1 / Go1 / JCM 11833 / OCM 88) (Methanosarcina frisia).